Consider the following 435-residue polypeptide: 3-phosphoshikimate 1-carboxyvinyltransferase (435 aa).

Residues K23, S24, and R28 each contribute to the 3-phosphoshikimate site. K23 lines the phosphoenolpyruvate pocket. G97 and R125 together coordinate phosphoenolpyruvate. The 3-phosphoshikimate site is built by S170, S171, Q172, S198, D314, N338, and K342. Q172 provides a ligand contact to phosphoenolpyruvate. D314 functions as the Proton acceptor in the catalytic mechanism. Phosphoenolpyruvate-binding residues include R346, R388, and K413.

Belongs to the EPSP synthase family. Monomer.

The protein resides in the cytoplasm. The enzyme catalyses 3-phosphoshikimate + phosphoenolpyruvate = 5-O-(1-carboxyvinyl)-3-phosphoshikimate + phosphate. It functions in the pathway metabolic intermediate biosynthesis; chorismate biosynthesis; chorismate from D-erythrose 4-phosphate and phosphoenolpyruvate: step 6/7. Functionally, catalyzes the transfer of the enolpyruvyl moiety of phosphoenolpyruvate (PEP) to the 5-hydroxyl of shikimate-3-phosphate (S3P) to produce enolpyruvyl shikimate-3-phosphate and inorganic phosphate. In Sodalis glossinidius (strain morsitans), this protein is 3-phosphoshikimate 1-carboxyvinyltransferase.